The chain runs to 64 residues: Large ribosomal subunit protein bL33 (64 aa).

Basic and acidic residues-rich tracts occupy residues 16 to 25 and 33 to 42; these read EARTSSDPKR and TTEKNRRNTT. Positions 16–42 are disordered; that stretch reads EARTSSDPKRSNGVSRYTTEKNRRNTT.

It belongs to the bacterial ribosomal protein bL33 family.

This chain is Large ribosomal subunit protein bL33, found in Prochlorococcus marinus (strain MIT 9301).